Reading from the N-terminus, the 156-residue chain is 6,7-dimethyl-8-ribityllumazine synthase (156 aa).

Residues F25, A59 to E61, and A83 to I85 contribute to the 5-amino-6-(D-ribitylamino)uracil site. A88–T89 is a binding site for (2S)-2-hydroxy-3-oxobutyl phosphate. H91 serves as the catalytic Proton donor. F116 is a binding site for 5-amino-6-(D-ribitylamino)uracil. R130 lines the (2S)-2-hydroxy-3-oxobutyl phosphate pocket.

The protein belongs to the DMRL synthase family.

The catalysed reaction is (2S)-2-hydroxy-3-oxobutyl phosphate + 5-amino-6-(D-ribitylamino)uracil = 6,7-dimethyl-8-(1-D-ribityl)lumazine + phosphate + 2 H2O + H(+). It participates in cofactor biosynthesis; riboflavin biosynthesis; riboflavin from 2-hydroxy-3-oxobutyl phosphate and 5-amino-6-(D-ribitylamino)uracil: step 1/2. Catalyzes the formation of 6,7-dimethyl-8-ribityllumazine by condensation of 5-amino-6-(D-ribitylamino)uracil with 3,4-dihydroxy-2-butanone 4-phosphate. This is the penultimate step in the biosynthesis of riboflavin. This Nitratidesulfovibrio vulgaris (strain ATCC 29579 / DSM 644 / CCUG 34227 / NCIMB 8303 / VKM B-1760 / Hildenborough) (Desulfovibrio vulgaris) protein is 6,7-dimethyl-8-ribityllumazine synthase.